The following is a 292-amino-acid chain: RWD domain-containing protein 2A (292 aa).

An RWD domain is found at 14–134; that stretch reads LEMEMLFSMF…QWLQDNSASY (121 aa).

The polypeptide is RWD domain-containing protein 2A (RWDD2A) (Homo sapiens (Human)).